The sequence spans 447 residues: Exodeoxyribonuclease 7 large subunit (447 aa).

The protein belongs to the XseA family. In terms of assembly, heterooligomer composed of large and small subunits.

It is found in the cytoplasm. The catalysed reaction is Exonucleolytic cleavage in either 5'- to 3'- or 3'- to 5'-direction to yield nucleoside 5'-phosphates.. In terms of biological role, bidirectionally degrades single-stranded DNA into large acid-insoluble oligonucleotides, which are then degraded further into small acid-soluble oligonucleotides. This chain is Exodeoxyribonuclease 7 large subunit, found in Pediococcus pentosaceus (strain ATCC 25745 / CCUG 21536 / LMG 10740 / 183-1w).